The sequence spans 150 residues: Large ribosomal subunit protein bL9 (150 aa).

It belongs to the bacterial ribosomal protein bL9 family.

Its function is as follows. Binds to the 23S rRNA. In Corynebacterium efficiens (strain DSM 44549 / YS-314 / AJ 12310 / JCM 11189 / NBRC 100395), this protein is Large ribosomal subunit protein bL9.